The primary structure comprises 473 residues: Aspartyl aminopeptidase 1 (473 aa).

His93 contributes to the Zn(2+) binding site. Residue His168 participates in substrate binding. Zn(2+)-binding residues include Asp262, Glu298, Glu299, and Asp343. Substrate is bound at residue Glu298. Substrate-binding residues include Asp343, His346, Lys371, and Tyr378. His437 contacts Zn(2+).

The protein belongs to the peptidase M18 family. Tetrahedron-shaped homododecamer built from six homodimers. Interacts with autophagy receptor Nbr1. Zn(2+) serves as cofactor.

It localises to the cytoplasm. It is found in the vacuole lumen. It catalyses the reaction Release of an N-terminal aspartate or glutamate from a peptide, with a preference for aspartate.. Its function is as follows. Aspartyl aminopeptidase that is able to remove aspartyl residue at N-terminus of angiotensin I. Also acts as a chaperone and efficiently suppressed the thermal aggregation of citrate synthase. This chain is Aspartyl aminopeptidase 1 (ape4), found in Schizosaccharomyces pombe (strain 972 / ATCC 24843) (Fission yeast).